The sequence spans 317 residues: Acetyl-coenzyme A carboxylase carboxyl transferase subunit beta (317 aa).

Residues 30–299 (LWTKCVACTA…VLPPLNVREK (270 aa)) form the CoA carboxyltransferase N-terminal domain. 4 residues coordinate Zn(2+): Cys34, Cys37, Cys53, and Cys56. The C4-type zinc finger occupies 34–56 (CVACTALTYTKDLQANQLVCTEC).

It belongs to the AccD/PCCB family. As to quaternary structure, acetyl-CoA carboxylase is a heterohexamer composed of biotin carboxyl carrier protein (AccB), biotin carboxylase (AccC) and two subunits each of ACCase subunit alpha (AccA) and ACCase subunit beta (AccD). Requires Zn(2+) as cofactor.

Its subcellular location is the cytoplasm. It catalyses the reaction N(6)-carboxybiotinyl-L-lysyl-[protein] + acetyl-CoA = N(6)-biotinyl-L-lysyl-[protein] + malonyl-CoA. It functions in the pathway lipid metabolism; malonyl-CoA biosynthesis; malonyl-CoA from acetyl-CoA: step 1/1. In terms of biological role, component of the acetyl coenzyme A carboxylase (ACC) complex. Biotin carboxylase (BC) catalyzes the carboxylation of biotin on its carrier protein (BCCP) and then the CO(2) group is transferred by the transcarboxylase to acetyl-CoA to form malonyl-CoA. The chain is Acetyl-coenzyme A carboxylase carboxyl transferase subunit beta from Crocosphaera subtropica (strain ATCC 51142 / BH68) (Cyanothece sp. (strain ATCC 51142)).